Consider the following 572-residue polypeptide: BOS complex subunit ncln (572 aa).

The first 35 residues, 1–35, serve as a signal peptide directing secretion; that stretch reads MFEEAGEVLENMLKVSFPLSLVLFLVLVCPLRAEA. Over 36 to 530 the chain is Extracellular; the sequence is AHEFSVYRMQ…TMNAYRVKPA (495 aa). N-linked (GlcNAc...) asparagine glycosylation is found at N108, N234, and N436. A helical transmembrane segment spans residues 531-551; that stretch reads IFDLLLAVCIASYLGVLYLAI. The Cytoplasmic portion of the chain corresponds to 552 to 572; it reads QNFGLLYGFLRRVTAPRVKQH.

This sequence belongs to the nicastrin family. In terms of assembly, component of the multi-pass translocon (MPT) complex.

The protein localises to the endoplasmic reticulum membrane. Its function is as follows. Component of the multi-pass translocon (MPT) complex that mediates insertion of multi-pass membrane proteins into the lipid bilayer of membranes. The MPT complex takes over after the SEC61 complex: following membrane insertion of the first few transmembrane segments of proteins by the SEC61 complex, the MPT complex occludes the lateral gate of the SEC61 complex to promote insertion of subsequent transmembrane regions. Antagonizes Nodal signaling and subsequent organization of axial structures during mesodermal patterning. Ectopic expression results in cyclopia, due to a defect in mesendoderm patterning. The protein is BOS complex subunit ncln (ncln) of Danio rerio (Zebrafish).